Reading from the N-terminus, the 94-residue chain is PTS system galactitol-specific EIIB component (94 aa).

Residues methionine 1 to glycine 94 form the PTS EIIB type-2 domain. The Phosphocysteine intermediate; for EIIB activity role is filled by cysteine 9. Cysteine 9 carries the phosphocysteine; by EIIA modification.

As to quaternary structure, forms a complex with one each of subunit of GatA, GatB and 2 subunits of GatC.

It localises to the cytoplasm. The catalysed reaction is galactitol(out) + N(pros)-phospho-L-histidyl-[protein] = galactitol 1-phosphate(in) + L-histidyl-[protein]. Functionally, the phosphoenolpyruvate-dependent sugar phosphotransferase system (PTS), a major carbohydrate active transport system, catalyzes the phosphorylation of incoming sugar substrates concomitant with their translocation across the cell membrane. The enzyme II complex composed of GatA, GatB and GatC is involved in galactitol transport. It can also use D-glucitol. The chain is PTS system galactitol-specific EIIB component from Escherichia coli (strain K12).